Here is a 659-residue protein sequence, read N- to C-terminus: MDIQTRIKELRKQINEANYLYHTKDQPIISDFVYDGLMRELIELETKYPEYDDETSPTKKIGGVVLDAFKKHTHTVPMMSLSNIFNKEELKVFYDRIQKVIPNTSFTTELKIDGLAVTLIYEKGIFKKAATRGNGVVGEDITENVKTIKTLPLQLSKPLDIEVRGEIYMSHKTFKEVNLERANSNLDLFVNPRNAAAGTVRQLDSKVVAKRRLDLFTYTVVGASNFNSTQKETLEFLSELGFPVNPHYKLVDNLDALSDAIDNYDILRKTLPYDTDGVVIKVNQFEHYETIGYTAKYPKYAGAYKFEAEKQITKVEDIIFQVGRTGVITPVAVLTPVFISGSLVSRATLHNEDYILNKDIRIDDQVLVHKAGEIIPEVIEVVLGSRTNQAPFEMVKHCPACESNLVRKQGEADYYCANDNCPGKNVFGLIHFASRAAMDIDTLGEKVVELLHDQTYLQTIPDIYKLHTFKDQLEELPGFGKKKVEKLLNAIEASKMQTLDRLIFGLGIKNVGAKVAKTLLNHYPSITLLADAKYEDLIQIPDIGPEIADSVTTYFSNESNQHMLEELKNLGLQMTYKIDVVTTHPFNGKTFVVTGTLDDFSRTEASDIIEKLGGKVSGSVSKKTDYVLAGKEAGSKLTKALELGIEVMDEATFKVKINE.

Residues 31–35 (DFVYD), 80–81 (SL), and glutamate 109 each bind NAD(+). The active-site N6-AMP-lysine intermediate is lysine 111. NAD(+)-binding residues include arginine 132, glutamate 166, lysine 281, and lysine 305. Positions 398, 401, 416, and 421 each coordinate Zn(2+). Residues 581–659 (VTTHPFNGKT…EATFKVKINE (79 aa)) enclose the BRCT domain.

It belongs to the NAD-dependent DNA ligase family. LigA subfamily. It depends on Mg(2+) as a cofactor. Mn(2+) serves as cofactor.

The catalysed reaction is NAD(+) + (deoxyribonucleotide)n-3'-hydroxyl + 5'-phospho-(deoxyribonucleotide)m = (deoxyribonucleotide)n+m + AMP + beta-nicotinamide D-nucleotide.. DNA ligase that catalyzes the formation of phosphodiester linkages between 5'-phosphoryl and 3'-hydroxyl groups in double-stranded DNA using NAD as a coenzyme and as the energy source for the reaction. It is essential for DNA replication and repair of damaged DNA. The protein is DNA ligase of Acholeplasma laidlawii (strain PG-8A).